Here is a 394-residue protein sequence, read N- to C-terminus: Venom metalloproteinase antarease-like TtrivMP_A (394 aa).

An N-terminal signal peptide occupies residues 1 to 16 (MISYLASIFLLATVSA). A propeptide spanning residues 17–158 (VPSGRVEVVF…AENVSRMAEE (142 aa)) is cleaved from the precursor. The N-linked (GlcNAc...) asparagine glycan is linked to Asn151. Residues 162-390 (IVVEYYIVTD…KPTAFCIFEQ (229 aa)) form the Peptidase M12B domain. Cys295 and Cys386 are oxidised to a cystine. Residue His319 participates in Zn(2+) binding. Glu320 is a catalytic residue. Zn(2+) is bound by residues His323 and His329.

The protein belongs to the venom metalloproteinase (M12B) family. Zn(2+) serves as cofactor. As to expression, expressed by the venom gland.

It is found in the secreted. Its activity is regulated as follows. Inhibited by EDTA. Acts as a metalloprotease. Penetrates intact tissue and specifically cleaves the vesicle-associated membrane protein 2 (VAMP2) (part of the SNARE complex) involved in pancreatic secretion, thus disrupting the normal vesicular traffic. The sequence is that of Venom metalloproteinase antarease-like TtrivMP_A from Tityus trivittatus (Argentinean scorpion).